A 505-amino-acid polypeptide reads, in one-letter code: MAQIDFRKKINWHRRYRSPQGVKTEHEILRIFESDRGRIINSPAIRRLQQKTQVFPLERNAAVRTRLTHSMEVQQVGRYIAKEILSRLKELKLLEAYGLDELTGPFESIVEMSCLMHDIGNPPFGHFGEAAINDWFRQRLHPEDAESQPLTDDRCSVAALRLRDGEEPLNELRRKIRQDLCHFEGNAQGIRLVHTLMRMNLTWAQVGGILKYTRPAWWRGETPETHHYLMKKPGYYLSEEAYIARLRKELNLALYSRFPLTWIMEAADDISYCVADLEDAVEKRIFTVEQLYHHLHEAWGQHEKGSLFSLVVENAWEKSRSNSLSRSTEDQFFMYLRVNTLNKLVPYAAQRFIDNLPAIFAGTFNHALLEDASECSDLLKLYKNVAVKHVFSHPDVEQLELQGYRVISGLLEIYRPLLSLSLSDFTELVEKERVKRFPIESRLFNKLSTRHRLAYVEAVSKLPSDSPEFPLWEYYYRCRLLQDYISGMTDLYAWDEYRRLMAVEQ.

In terms of domain architecture, HD spans 66-273; that stretch reads RLTHSMEVQQ…MEAADDISYC (208 aa).

This sequence belongs to the dGTPase family. Type 1 subfamily. In terms of assembly, homotetramer. It depends on Mg(2+) as a cofactor.

It carries out the reaction dGTP + H2O = 2'-deoxyguanosine + triphosphate + H(+). Its function is as follows. dGTPase preferentially hydrolyzes dGTP over the other canonical NTPs. This is Deoxyguanosinetriphosphate triphosphohydrolase from Escherichia coli O17:K52:H18 (strain UMN026 / ExPEC).